Here is a 413-residue protein sequence, read N- to C-terminus: Multifunctional CCA protein (413 aa).

ATP-binding residues include Gly-8 and Arg-11. Residues Gly-8 and Arg-11 each contribute to the CTP site. Positions 21 and 23 each coordinate Mg(2+). ATP-binding residues include Arg-91, Arg-143, and Arg-146. CTP-binding residues include Arg-91, Arg-143, and Arg-146. Residues 232–333 form the HD domain; sequence TGVHVMMVVD…VRFFERSDAL (102 aa).

Belongs to the tRNA nucleotidyltransferase/poly(A) polymerase family. Bacterial CCA-adding enzyme type 1 subfamily. In terms of assembly, monomer. Can also form homodimers and oligomers. Requires Mg(2+) as cofactor. The cofactor is Ni(2+).

It carries out the reaction a tRNA precursor + 2 CTP + ATP = a tRNA with a 3' CCA end + 3 diphosphate. It catalyses the reaction a tRNA with a 3' CCA end + 2 CTP + ATP = a tRNA with a 3' CCACCA end + 3 diphosphate. Catalyzes the addition and repair of the essential 3'-terminal CCA sequence in tRNAs without using a nucleic acid template. Adds these three nucleotides in the order of C, C, and A to the tRNA nucleotide-73, using CTP and ATP as substrates and producing inorganic pyrophosphate. tRNA 3'-terminal CCA addition is required both for tRNA processing and repair. Also involved in tRNA surveillance by mediating tandem CCA addition to generate a CCACCA at the 3' terminus of unstable tRNAs. While stable tRNAs receive only 3'-terminal CCA, unstable tRNAs are marked with CCACCA and rapidly degraded. The sequence is that of Multifunctional CCA protein from Burkholderia ambifaria (strain MC40-6).